The chain runs to 542 residues: CTP synthase (542 aa).

Positions 1-269 (MQTKYIFITG…DALICELLHL (269 aa)) are amidoligase domain. Residue serine 14 coordinates CTP. Serine 14 is a binding site for UTP. Residues 15–20 (SLGKGL) and aspartate 72 contribute to the ATP site. Mg(2+) contacts are provided by aspartate 72 and glutamate 143. CTP is bound by residues 150-152 (DIE), 189-194 (KTKPSQ), and lysine 225. UTP contacts are provided by residues 189–194 (KTKPSQ) and lysine 225. 241 to 243 (KDV) is an ATP binding site. The region spanning 301–538 (YVQHQDAYKS…IQAMIIYHKS (238 aa)) is the Glutamine amidotransferase type-1 domain. Residue glycine 358 participates in L-glutamine binding. Cysteine 385 serves as the catalytic Nucleophile; for glutamine hydrolysis. L-glutamine is bound by residues 386 to 389 (LGMQ), glutamate 409, and arginine 466. Active-site residues include histidine 511 and glutamate 513.

The protein belongs to the CTP synthase family. Homotetramer.

The enzyme catalyses UTP + L-glutamine + ATP + H2O = CTP + L-glutamate + ADP + phosphate + 2 H(+). It catalyses the reaction L-glutamine + H2O = L-glutamate + NH4(+). The catalysed reaction is UTP + NH4(+) + ATP = CTP + ADP + phosphate + 2 H(+). Its pathway is pyrimidine metabolism; CTP biosynthesis via de novo pathway; CTP from UDP: step 2/2. With respect to regulation, allosterically activated by GTP, when glutamine is the substrate; GTP has no effect on the reaction when ammonia is the substrate. The allosteric effector GTP functions by stabilizing the protein conformation that binds the tetrahedral intermediate(s) formed during glutamine hydrolysis. Inhibited by the product CTP, via allosteric rather than competitive inhibition. Its function is as follows. Catalyzes the ATP-dependent amination of UTP to CTP with either L-glutamine or ammonia as the source of nitrogen. Regulates intracellular CTP levels through interactions with the four ribonucleotide triphosphates. This Protochlamydia amoebophila (strain UWE25) protein is CTP synthase.